The following is a 307-amino-acid chain: Aspartate carbamoyltransferase catalytic subunit (307 aa).

Residues Arg56 and Thr57 each contribute to the carbamoyl phosphate site. Lys84 contributes to the L-aspartate binding site. Positions 106, 136, and 139 each coordinate carbamoyl phosphate. The L-aspartate site is built by Arg169 and Arg221. Carbamoyl phosphate contacts are provided by Ala262 and Pro263.

It belongs to the aspartate/ornithine carbamoyltransferase superfamily. ATCase family. Heterododecamer (2C3:3R2) of six catalytic PyrB chains organized as two trimers (C3), and six regulatory PyrI chains organized as three dimers (R2).

It carries out the reaction carbamoyl phosphate + L-aspartate = N-carbamoyl-L-aspartate + phosphate + H(+). It participates in pyrimidine metabolism; UMP biosynthesis via de novo pathway; (S)-dihydroorotate from bicarbonate: step 2/3. In terms of biological role, catalyzes the condensation of carbamoyl phosphate and aspartate to form carbamoyl aspartate and inorganic phosphate, the committed step in the de novo pyrimidine nucleotide biosynthesis pathway. In Streptococcus pneumoniae (strain JJA), this protein is Aspartate carbamoyltransferase catalytic subunit.